Reading from the N-terminus, the 314-residue chain is Serine/threonine-protein phosphatase PP2A-5 catalytic subunit (314 aa).

Mn(2+)-binding residues include D62, H64, D90, and N122. H123 functions as the Proton donor in the catalytic mechanism. Residues H172 and H246 each contribute to the Mn(2+) site.

It belongs to the PPP phosphatase family. PP-2A subfamily. It depends on Mn(2+) as a cofactor.

The protein resides in the cytoplasm. The enzyme catalyses O-phospho-L-seryl-[protein] + H2O = L-seryl-[protein] + phosphate. The catalysed reaction is O-phospho-L-threonyl-[protein] + H2O = L-threonyl-[protein] + phosphate. The polypeptide is Serine/threonine-protein phosphatase PP2A-5 catalytic subunit (NPP5) (Nicotiana tabacum (Common tobacco)).